Here is a 2372-residue protein sequence, read N- to C-terminus: Nonribosomal peptide synthase roqA (2372 aa).

Residues 217 to 610 (EHCRSQPDAE…VGRKDREVKI (394 aa)) are adenylation 1. Positions 723–745 (AASSHSSTREQPSNQRDKEDVEL) are disordered. Over residues 725–736 (SSHSSTREQPSN) the composition is skewed to polar residues. The 74-residue stretch at 750–823 (SAKENTLCSV…KIARCTAESK (74 aa)) folds into the Carrier 1 domain. The residue at position 784 (serine 784) is an O-(pantetheine 4'-phosphoryl)serine. A condensation 1 region spans residues 856–1122 (EDIYPCTPLQ…FATFPFRTQL (267 aa)). Residues 1290 to 1679 (QPNSEAVCAW…VGRKDTQVKL (390 aa)) form an adenylation 2 region. The Carrier 2 domain maps to 1819–1895 (KPTTEQERFV…LFCKHVILIQ (77 aa)). Serine 1856 bears the O-(pantetheine 4'-phosphoryl)serine mark. Residues 1962–2227 (TSNYTSTAIF…FNVLPCRIAI (266 aa)) form a condensation 2 region.

It participates in alkaloid biosynthesis. Dipeptide synthase; part of the gene cluster that mediates the biosynthesis of the mycotoxins roquefortine C and meleagrin. The first stage is catalyzed by the dipeptide synthase roqA which condenses histidine and tryptophan to produce histidyltryptophanyldiketopiperazine (HTD). HTD is then converted to roquefortine C through two possible pathways. In the first pathway, prenyltransferase roqD transforms HTD to the intermediate roquefortine D, which is in turn converted to roquefortine C by the cytochrome P450 monooxygenase roqR. In the second pathway, HTD is first converted to the intermediate dehydrohistidyltryptophanyldi-ketopiperazine (DHTD) by roqR which is then prenylated by roqD to form roquefortine C. Roquefortine C can be further transformed to meleagrin via three more reactions including oxydation to glandicolin A by roqM, which is further reduced to glandicoline B by roqO. Finally, glandicoline B is converted to meleagrin by the glandicoline B O-methyltransferase roqN. More studies identified further branching and additional metabolites produced by the roquefortine/meleagrin cluster, including roquefortine F, roquefortine L, roquefortine M, roquefortine N and neoxaline. The protein is Nonribosomal peptide synthase roqA of Penicillium rubens (strain ATCC 28089 / DSM 1075 / NRRL 1951 / Wisconsin 54-1255) (Penicillium chrysogenum).